We begin with the raw amino-acid sequence, 151 residues long: 3-hydroxyacyl-[acyl-carrier-protein] dehydratase FabZ (151 aa).

Residue His-49 is part of the active site.

This sequence belongs to the thioester dehydratase family. FabZ subfamily.

The protein resides in the cytoplasm. The enzyme catalyses a (3R)-hydroxyacyl-[ACP] = a (2E)-enoyl-[ACP] + H2O. In terms of biological role, involved in unsaturated fatty acids biosynthesis. Catalyzes the dehydration of short chain beta-hydroxyacyl-ACPs and long chain saturated and unsaturated beta-hydroxyacyl-ACPs. This is 3-hydroxyacyl-[acyl-carrier-protein] dehydratase FabZ from Bordetella petrii (strain ATCC BAA-461 / DSM 12804 / CCUG 43448).